The primary structure comprises 364 residues: Methylthioribose-1-phosphate isomerase (364 aa).

Residue D254 is the Proton donor of the active site.

Belongs to the eIF-2B alpha/beta/delta subunits family. MtnA subfamily.

The protein localises to the cytoplasm. It is found in the nucleus. It catalyses the reaction 5-(methylsulfanyl)-alpha-D-ribose 1-phosphate = 5-(methylsulfanyl)-D-ribulose 1-phosphate. The protein operates within amino-acid biosynthesis; L-methionine biosynthesis via salvage pathway; L-methionine from S-methyl-5-thio-alpha-D-ribose 1-phosphate: step 1/6. In terms of biological role, catalyzes the interconversion of methylthioribose-1-phosphate (MTR-1-P) into methylthioribulose-1-phosphate (MTRu-1-P). The polypeptide is Methylthioribose-1-phosphate isomerase (Drosophila erecta (Fruit fly)).